A 382-amino-acid chain; its full sequence is UDP-4-amino-4-deoxy-L-arabinose--oxoglutarate aminotransferase (382 aa).

Position 182 is an N6-(pyridoxal phosphate)lysine (K182).

This sequence belongs to the DegT/DnrJ/EryC1 family. ArnB subfamily. In terms of assembly, homodimer. Pyridoxal 5'-phosphate is required as a cofactor.

It catalyses the reaction UDP-4-amino-4-deoxy-beta-L-arabinose + 2-oxoglutarate = UDP-beta-L-threo-pentopyranos-4-ulose + L-glutamate. Its pathway is nucleotide-sugar biosynthesis; UDP-4-deoxy-4-formamido-beta-L-arabinose biosynthesis; UDP-4-deoxy-4-formamido-beta-L-arabinose from UDP-alpha-D-glucuronate: step 2/3. It functions in the pathway bacterial outer membrane biogenesis; lipopolysaccharide biosynthesis. Its function is as follows. Catalyzes the conversion of UDP-4-keto-arabinose (UDP-Ara4O) to UDP-4-amino-4-deoxy-L-arabinose (UDP-L-Ara4N). The modified arabinose is attached to lipid A and is required for resistance to polymyxin and cationic antimicrobial peptides. This is UDP-4-amino-4-deoxy-L-arabinose--oxoglutarate aminotransferase from Pectobacterium atrosepticum (strain SCRI 1043 / ATCC BAA-672) (Erwinia carotovora subsp. atroseptica).